We begin with the raw amino-acid sequence, 192 residues long: E3 ubiquitin-protein ligase RNF185 (192 aa).

Polar residues predominate over residues 1–14 (MASKGPSASASTEN). Residues 1 to 30 (MASKGPSASASTENSSAGGPSGSSNGTGES) form a disordered region. At 1 to 130 (MASKGPSASA…GGFQGFGFGD (130 aa)) the chain is on the cytoplasmic side. The span at 15-27 (SSAGGPSGSSNGT) shows a compositional bias: low complexity. A required for ubiquitin ligase activity and protection against ER stress-induced cell death region spans residues 29–80 (ESGGQDSTFECNICLDTAKDAVISLCGHLFCWPCLHQWLETRPNRQVCPVCK). The segment at 39 to 80 (CNICLDTAKDAVISLCGHLFCWPCLHQWLETRPNRQVCPVCK) adopts an RING-type zinc-finger fold. Residues 90 to 123 (PLYGRGSTGQQDPREKTPPRPQGQRPEPENRGGF) are disordered. A helical membrane pass occupies residues 131-151 (GGFQMSFGIGAFPFGIFATAF). Over 152-171 (NINDGRPPPAVPGTPQYVDE) the chain is Mitochondrial intermembrane. Residues 172 to 192 (QFLSRLFLFVALVIMFWLLIA) form a helical membrane-spanning segment.

Interacts with ATG5 and BNIP1.

Its subcellular location is the mitochondrion outer membrane. It is found in the endoplasmic reticulum membrane. It catalyses the reaction S-ubiquitinyl-[E2 ubiquitin-conjugating enzyme]-L-cysteine + [acceptor protein]-L-lysine = [E2 ubiquitin-conjugating enzyme]-L-cysteine + N(6)-ubiquitinyl-[acceptor protein]-L-lysine.. The protein operates within protein modification; protein ubiquitination. In terms of biological role, E3 ubiquitin-protein ligase that regulates selective mitochondrial autophagy by mediating 'Lys-63'-linked polyubiquitination of BNIP1. Acts in the endoplasmic reticulum (ER)-associated degradation (ERAD) pathway, which targets misfolded proteins that accumulate in the endoplasmic reticulum (ER) for ubiquitination and subsequent proteasome-mediated degradation. Protects cells from ER stress-induced apoptosis. Responsible for the cotranslational ubiquitination and degradation of CFTR in the ERAD pathway. Also acts as a regulator of the innate antiviral response by catalyzing 'Lys-27'-linked polyubiquitination of CGAS, thereby promoting CGAS cyclic GMP-AMP synthase activity. Preferentially associates with the E2 enzymes UBE2J1 and UBE2J2. This is E3 ubiquitin-protein ligase RNF185 (Rnf185) from Rattus norvegicus (Rat).